A 575-amino-acid polypeptide reads, in one-letter code: Proline--tRNA ligase 1 (575 aa).

It belongs to the class-II aminoacyl-tRNA synthetase family. ProS type 1 subfamily. In terms of assembly, homodimer.

It is found in the cytoplasm. The enzyme catalyses tRNA(Pro) + L-proline + ATP = L-prolyl-tRNA(Pro) + AMP + diphosphate. Functionally, catalyzes the attachment of proline to tRNA(Pro) in a two-step reaction: proline is first activated by ATP to form Pro-AMP and then transferred to the acceptor end of tRNA(Pro). As ProRS can inadvertently accommodate and process non-cognate amino acids such as alanine and cysteine, to avoid such errors it has two additional distinct editing activities against alanine. One activity is designated as 'pretransfer' editing and involves the tRNA(Pro)-independent hydrolysis of activated Ala-AMP. The other activity is designated 'posttransfer' editing and involves deacylation of mischarged Ala-tRNA(Pro). The misacylated Cys-tRNA(Pro) is not edited by ProRS. In Anaeromyxobacter dehalogenans (strain 2CP-C), this protein is Proline--tRNA ligase 1.